We begin with the raw amino-acid sequence, 227 residues long: Eukaryotic translation initiation factor 4E-1 (227 aa).

Residues 1 to 52 form a disordered region; that stretch reads MAEEHETRPPSAGRPPSSGRGRADDADEREEGEIADDDSGHAPPQANPAAPH. The segment covering 9 to 20 has biased composition (low complexity); sequence PPSAGRPPSSGR. Residues 25–37 are compositionally biased toward acidic residues; it reads DADEREEGEIADD. EIF4G-binding stretches follow at residues 52–55 and 62–98; these read HPLE and FDNP…NNIH. MRNA is bound by residues 70–75, lysine 102, and 120–121; these read KQATWG and WE. Cysteine 125 and cysteine 163 are disulfide-bonded. Residues 146-155 form an EIF4G-binding region; the sequence is HTLLAMIGEQ. MRNA is bound by residues 170–175 and 215–219; these read RGKQER and KKMDK.

The protein belongs to the eukaryotic initiation factor 4E family. As to quaternary structure, EIF4F is a multi-subunit complex, the composition of which varies with external and internal environmental conditions. It is composed of at least EIF4A, EIF4E and EIF4G. EIF4E is also known to interact with other partners. In higher plants two isoforms of EIF4F have been identified, named isoform EIF4F and isoform EIF(iso)4F. Isoform EIF4F has subunits p220 and p26, whereas isoform EIF(iso)4F has subunits p82 and p28. Post-translationally, according to the redox status, the Cys-125-Cys-163 disulfide bridge may have a role in regulating protein function by affecting its ability to bind capped mRNA.

Its subcellular location is the nucleus. It is found in the cytoplasm. Component of the protein complex eIF4F, which is involved in the recognition of the mRNA cap, ATP-dependent unwinding of 5'-terminal secondary structure and recruitment of mRNA to the ribosome. Recognizes and binds the 7-methylguanosine-containing mRNA cap during an early step in the initiation of protein synthesis and facilitates ribosome binding by inducing the unwinding of the mRNAs secondary structures. This is Eukaryotic translation initiation factor 4E-1 from Oryza sativa subsp. japonica (Rice).